The chain runs to 189 residues: Small ribosomal subunit protein uS4 (189 aa).

The 72-residue stretch at 107 to 178 (RRLQTQVFKL…AGRVKRKNQG (72 aa)) folds into the S4 RNA-binding domain. A disordered region spans residues 160–189 (HNSPYGGGRAGRVKRKNQGKGGEEGAEEEE).

This sequence belongs to the universal ribosomal protein uS4 family. In terms of assembly, component of the small ribosomal subunit. Mature ribosomes consist of a small (40S) and a large (60S) subunit. The 40S subunit contains about 32 different proteins and 1 molecule of RNA (18S). The 60S subunit contains 45 different proteins and 3 molecules of RNA (25S, 5.8S and 5S).

It is found in the cytoplasm. Component of the ribosome, a large ribonucleoprotein complex responsible for the synthesis of proteins in the cell. The small ribosomal subunit (SSU) binds messenger RNAs (mRNAs) and translates the encoded message by selecting cognate aminoacyl-transfer RNA (tRNA) molecules. The large subunit (LSU) contains the ribosomal catalytic site termed the peptidyl transferase center (PTC), which catalyzes the formation of peptide bonds, thereby polymerizing the amino acids delivered by tRNAs into a polypeptide chain. The nascent polypeptides leave the ribosome through a tunnel in the LSU and interact with protein factors that function in enzymatic processing, targeting, and the membrane insertion of nascent chains at the exit of the ribosomal tunnel. RPS9B is involved in nucleolar processing of pre-18S ribosomal RNA and ribosome assembly. The chain is Small ribosomal subunit protein uS4 (RPS9B) from Candida albicans (strain SC5314 / ATCC MYA-2876) (Yeast).